The chain runs to 403 residues: Arginine biosynthesis bifunctional protein ArgJ (403 aa).

The span at 1-11 (MVQSVLSSTSH) shows a compositional bias: polar residues. Residues 1–21 (MVQSVLSSTSHGSERADMSAA) are disordered. Substrate contacts are provided by threonine 161, lysine 183, threonine 194, glutamate 273, asparagine 398, and threonine 403. Residue threonine 194 is the Nucleophile of the active site.

Belongs to the ArgJ family. In terms of assembly, heterotetramer of two alpha and two beta chains.

Its subcellular location is the cytoplasm. It catalyses the reaction N(2)-acetyl-L-ornithine + L-glutamate = N-acetyl-L-glutamate + L-ornithine. The catalysed reaction is L-glutamate + acetyl-CoA = N-acetyl-L-glutamate + CoA + H(+). Its pathway is amino-acid biosynthesis; L-arginine biosynthesis; L-ornithine and N-acetyl-L-glutamate from L-glutamate and N(2)-acetyl-L-ornithine (cyclic): step 1/1. It participates in amino-acid biosynthesis; L-arginine biosynthesis; N(2)-acetyl-L-ornithine from L-glutamate: step 1/4. Catalyzes two activities which are involved in the cyclic version of arginine biosynthesis: the synthesis of N-acetylglutamate from glutamate and acetyl-CoA as the acetyl donor, and of ornithine by transacetylation between N(2)-acetylornithine and glutamate. The chain is Arginine biosynthesis bifunctional protein ArgJ from Rhodococcoides fascians (Rhodococcus fascians).